A 45-amino-acid chain; its full sequence is uncharacterized protein (45 aa).

The segment at Arg-18–Ser-45 is disordered.

This is an uncharacterized protein from Homo sapiens (Human).